The primary structure comprises 131 residues: Con-Ins Q1b (131 aa).

The N-terminal stretch at 1–24 (MTTSSYFLLVALGLLLYLCQSSFG) is a signal peptide. Disulfide bonds link Cys-29–Cys-107, Cys-41–Cys-110, Cys-53–Cys-123, and Cys-109–Cys-114. Residues 59-92 (LQGGTDDARKKRGRASLLRKRRGFLSMLKARAKR) constitute a propeptide, c peptide. Residue Glu-118 is modified to 4-carboxyglutamate; partial. Ser-130 carries the serine amide modification.

The protein belongs to the insulin family. As to quaternary structure, heterodimer of A and B chains; disulfide-linked. As to expression, expressed by the venom gland.

It is found in the secreted. This venom insulin facilitates prey capture by rapidly inducing hypoglycemic shock. Intraperitoneal injection of this peptide into zebrafish lowers blood glucose with the same potency than human insulin. In vivo, when applied to water, this peptide reduces overall locomotor activity of zebrafish larvae, observed as a significant decrease in the percentage of time spent swimming and movement frequency. The protein is Con-Ins Q1b of Conus quercinus (Oak cone).